Consider the following 140-residue polypeptide: Peptide methionine sulfoxide reductase MsrB (140 aa).

Positions 10-132 (EEDWKSVLTP…NSVSLGFTKE (123 aa)) constitute a MsrB domain. Positions 49, 52, 98, and 101 each coordinate Zn(2+). The active-site Nucleophile is the cysteine 121.

Belongs to the MsrB Met sulfoxide reductase family. The cofactor is Zn(2+).

It carries out the reaction L-methionyl-[protein] + [thioredoxin]-disulfide + H2O = L-methionyl-(R)-S-oxide-[protein] + [thioredoxin]-dithiol. The sequence is that of Peptide methionine sulfoxide reductase MsrB from Methanosarcina mazei (strain ATCC BAA-159 / DSM 3647 / Goe1 / Go1 / JCM 11833 / OCM 88) (Methanosarcina frisia).